The sequence spans 158 residues: NADH-quinone oxidoreductase subunit B 2 (158 aa).

Residues Cys-37, Cys-38, Cys-102, and Cys-132 each coordinate [4Fe-4S] cluster.

It belongs to the complex I 20 kDa subunit family. NDH-1 is composed of 14 different subunits. Subunits NuoB, C, D, E, F, and G constitute the peripheral sector of the complex. It depends on [4Fe-4S] cluster as a cofactor.

Its subcellular location is the cell inner membrane. It catalyses the reaction a quinone + NADH + 5 H(+)(in) = a quinol + NAD(+) + 4 H(+)(out). NDH-1 shuttles electrons from NADH, via FMN and iron-sulfur (Fe-S) centers, to quinones in the respiratory chain. Couples the redox reaction to proton translocation (for every two electrons transferred, four hydrogen ions are translocated across the cytoplasmic membrane), and thus conserves the redox energy in a proton gradient. This Nitrosospira multiformis (strain ATCC 25196 / NCIMB 11849 / C 71) protein is NADH-quinone oxidoreductase subunit B 2.